Reading from the N-terminus, the 240-residue chain is uncharacterized protein (240 aa).

3 helical membrane passes run 12–32, 66–86, and 89–109; these read ICIH…ILMS, IQVL…FVLV, and ISGY…IYFF. N-linked (GlcNAc...) asparagine; by host glycosylation is found at Asn129 and Asn157.

It localises to the membrane. This is an uncharacterized protein from Acanthamoeba polyphaga mimivirus (APMV).